Here is a 485-residue protein sequence, read N- to C-terminus: NADH-quinone oxidoreductase subunit N (485 aa).

The next 14 helical transmembrane spans lie at 8–28, 35–55, 71–91, 105–125, 127–147, 159–179, 203–223, 235–255, 271–291, 297–317, 326–346, 373–393, 408–430, and 455–475; these read LIALLPLLIVGLTVVVVMLSI, FLNATLSVIGLNAALVSLWFV, GFAMLYTGLVLLASLATCTFA, FYLLVLIASLGGILLANANHL, ALFLGIELISLPLFGLIGYAF, YTILSAAASSFLLFGMALVYA, LLAGFGLMIVGLGFKLSLVPF, PAPVSTFLATASKIAIFGVVM, VVLGIIAFASIIFGNLMALSQ, LLGYSSISHLGYLLVALIALQ, VGVYLAGYLFSSLGAFGVVSL, AAVMTVMMLSLAGIPMTLGFI, WWLVAAVVVGSAIGLYYYLRVAV, and IVVLISALLVLVLGVWPQPLI.

The protein belongs to the complex I subunit 2 family. As to quaternary structure, NDH-1 is composed of 13 different subunits. Subunits NuoA, H, J, K, L, M, N constitute the membrane sector of the complex.

The protein resides in the cell inner membrane. It carries out the reaction a quinone + NADH + 5 H(+)(in) = a quinol + NAD(+) + 4 H(+)(out). Functionally, NDH-1 shuttles electrons from NADH, via FMN and iron-sulfur (Fe-S) centers, to quinones in the respiratory chain. The immediate electron acceptor for the enzyme in this species is believed to be ubiquinone. Couples the redox reaction to proton translocation (for every two electrons transferred, four hydrogen ions are translocated across the cytoplasmic membrane), and thus conserves the redox energy in a proton gradient. The sequence is that of NADH-quinone oxidoreductase subunit N from Salmonella schwarzengrund (strain CVM19633).